Consider the following 478-residue polypeptide: Proline--tRNA ligase (478 aa).

This sequence belongs to the class-II aminoacyl-tRNA synthetase family. ProS type 3 subfamily. As to quaternary structure, homodimer.

Its subcellular location is the cytoplasm. The enzyme catalyses tRNA(Pro) + L-proline + ATP = L-prolyl-tRNA(Pro) + AMP + diphosphate. Its function is as follows. Catalyzes the attachment of proline to tRNA(Pro) in a two-step reaction: proline is first activated by ATP to form Pro-AMP and then transferred to the acceptor end of tRNA(Pro). This is Proline--tRNA ligase from Clostridium botulinum (strain Kyoto / Type A2).